A 438-amino-acid chain; its full sequence is Mannan endo-1,4-beta-mannosidase F (438 aa).

The signal sequence occupies residues 1–17 (MHPLPSVALLSAIGAVA). The 36-residue stretch at 19–54 (QVGPWGQCGGRSYTGETSCVSGWSCVLFNEWYSQCQ) folds into the CBM1 domain. The interval 60-96 (STSSVSATAAPSSTSSSKESVPSATTSKKPVPTGSSS) is ser-rich linker. The segment covering 61-86 (TSSVSATAAPSSTSSSKESVPSATTS) has biased composition (low complexity). The segment at 61 to 92 (TSSVSATAAPSSTSSSKESVPSATTSKKPVPT) is disordered. The catalytic stretch occupies residues 97-438 (FVKADGLKFN…CGVADHLSTL (342 aa)). The substrate site is built by Trp-149 and Asn-263. Glu-264 acts as the Proton donor in catalysis. Asn-277 is a glycosylation site (N-linked (GlcNAc...) asparagine). Tyr-339 is a binding site for substrate. Glu-373 functions as the Nucleophile in the catalytic mechanism. A substrate-binding site is contributed by Trp-402.

It belongs to the glycosyl hydrolase 5 (cellulase A) family.

The protein resides in the secreted. It carries out the reaction Random hydrolysis of (1-&gt;4)-beta-D-mannosidic linkages in mannans, galactomannans and glucomannans.. Its function is as follows. Endo-1,4-mannanase, a crucial enzyme for depolymerization of seed galactomannans and wood galactoglucomannans. The sequence is that of Mannan endo-1,4-beta-mannosidase F (manF) from Aspergillus fumigatus (strain ATCC MYA-4609 / CBS 101355 / FGSC A1100 / Af293) (Neosartorya fumigata).